A 424-amino-acid polypeptide reads, in one-letter code: Kynureninase (424 aa).

Pyridoxal 5'-phosphate-binding positions include Leu109, Thr110, 137–140 (FPSD), Asp222, His225, and Tyr247. The residue at position 248 (Lys248) is an N6-(pyridoxal phosphate)lysine. The pyridoxal 5'-phosphate site is built by Trp278 and Asn306.

It belongs to the kynureninase family. Homodimer. Pyridoxal 5'-phosphate is required as a cofactor.

The catalysed reaction is L-kynurenine + H2O = anthranilate + L-alanine + H(+). The enzyme catalyses 3-hydroxy-L-kynurenine + H2O = 3-hydroxyanthranilate + L-alanine + H(+). It functions in the pathway amino-acid degradation; L-kynurenine degradation; L-alanine and anthranilate from L-kynurenine: step 1/1. The protein operates within cofactor biosynthesis; NAD(+) biosynthesis; quinolinate from L-kynurenine: step 2/3. In terms of biological role, catalyzes the cleavage of L-kynurenine (L-Kyn) and L-3-hydroxykynurenine (L-3OHKyn) into anthranilic acid (AA) and 3-hydroxyanthranilic acid (3-OHAA), respectively. The chain is Kynureninase from Koribacter versatilis (strain Ellin345).